Here is a 1310-residue protein sequence, read N- to C-terminus: Multidrug resistance protein 4 (1310 aa).

Helical transmembrane passes span 48-68 (WLDLILLAVGIFGSIGCGVLT), 125-145 (MVCFAIGSGVGSFLMTFCFFV), 196-216 (KFGIIFQTTTSFIAGYAIGFA), 223-243 (LVIMSMSPFIVLSMTLLAVFA), and 299-319 (GLTVGLGLGAVMFFIMGAFSL). The ABC transmembrane type-1 1 domain maps to 55–368 (AVGIFGSIGC…IAIPLNIFAT (314 aa)). A glycan (N-linked (GlcNAc...) asparagine) is linked at Asn336. Residues 342–362 (VMIVFICVLIATQGLSIIAIP) form a helical membrane-spanning segment. A glycan (N-linked (GlcNAc...) asparagine) is linked at Asn402. The region spanning 403-642 (ITLEDVQFRY…KGTYYGLVKR (240 aa)) is the ABC transporter 1 domain. ATP is bound at residue 438-445 (GASGCGKS). Asn608 carries an N-linked (GlcNAc...) asparagine glycan. Helical transmembrane passes span 721-741 (WFLSTFGFIGGIGGGAIFPFF) and 773-793 (IIVVVIGVASFLSFFMYIGLF). Residues 722-1030 (FLSTFGFIGG…LGNIVPDIGK (309 aa)) form the ABC transmembrane type-1 2 domain. Residue Asn816 is glycosylated (N-linked (GlcNAc...) asparagine). Helical transmembrane passes span 849–869 (VGNVIHIISTIGFALGIAFYY), 871–891 (WKVSLAVMAVSPVLIVVVFIN), and 945–965 (IGIYKWAPLLSIFMCLTTLLT). Positions 1065 to 1304 (IEFKDICFRY…KGFYYTLAMQ (240 aa)) constitute an ABC transporter 2 domain. 1100–1107 (GASGCGKS) contributes to the ATP binding site.

It belongs to the ABC transporter superfamily. ABCB family. Multidrug resistance exporter (TC 3.A.1.201) subfamily.

Its subcellular location is the membrane. It carries out the reaction ATP + H2O + xenobioticSide 1 = ADP + phosphate + xenobioticSide 2.. Functionally, energy-dependent efflux pump responsible for decreased drug accumulation in multidrug resistance parasites. The chain is Multidrug resistance protein 4 from Entamoeba histolytica (strain ATCC 30459 / HM-1:IMSS / ABRM).